The primary structure comprises 613 residues: Proton myo-inositol cotransporter hmit-1.2 (613 aa).

Over 1–21 the chain is Cytoplasmic; the sequence is MVAVEFKVSESGRPRPEKNPK. Residues 22–42 traverse the membrane as a helical segment; sequence LGFFVYLLGSAAIIGGFLFGY. The Extracellular segment spans residues 43–69; that stretch reads DTSVVSAAMLYVPEAPGLKPMGTVWKE. The helical transmembrane segment at 70–90 threads the bilayer; that stretch reads VIVSITPGMAAVGAWFSGAGS. Topologically, residues 91–96 are cytoplasmic; that stretch reads DRYGRK. The chain crosses the membrane as a helical span at residues 97-117; the sequence is PIIIGSTLIFVCGAVICAVAW. At 118 to 119 the chain is on the extracellular side; that stretch reads TK. Residues 120 to 140 traverse the membrane as a helical segment; that stretch reads IVMLIGRIFLGVGIGFASMVV. At 141-157 the chain is on the cytoplasmic side; the sequence is PVYLGEASPTHVRGTLV. A helical transmembrane segment spans residues 158–178; it reads SAFAMMISFGQVVANIMGGVF. Over 179-189 the chain is Extracellular; the sequence is SYWEPYTIGWR. A helical transmembrane segment spans residues 190–210; the sequence is LMFAFAGIPALIQFVCFIFLP. Topologically, residues 211-279 are cytoplasmic; the sequence is ETPRWLYENG…RILKTPHVLK (69 aa). The chain crosses the membrane as a helical span at residues 280–300; it reads ACFIGSMLQAFQQLAGINTIL. The Extracellular segment spans residues 301 to 317; the sequence is YYTADIIRSAGIENYHT. The chain crosses the membrane as a helical span at residues 318-338; sequence IIWISVILSICNLIGPFAPMF. Over 339–347 the chain is Cytoplasmic; sequence FIEKLGRRK. A helical membrane pass occupies residues 348 to 368; the sequence is LFLFSCAGVVVSLVLIGVSFL. The Extracellular segment spans residues 369 to 472; sequence LVGNDSAPNF…QKHHCTTSYT (104 aa). Asn-372, Asn-451, and Asn-456 each carry an N-linked (GlcNAc...) asparagine glycan. The helical transmembrane segment at 473–493 threads the bilayer; sequence ILPIVMMGVYLLTFSCGFTSL. The Cytoplasmic segment spans residues 494 to 515; it reads PWVLNSEFYPMWARSTCVSIST. A helical membrane pass occupies residues 516-536; it reads LSNWVFNLIIALTYLSLTHAI. The Extracellular segment spans residues 537-539; it reads TKY. Residues 540-560 form a helical membrane-spanning segment; sequence GAFWLYAIFTIIAFIFIYFLV. The Cytoplasmic portion of the chain corresponds to 561 to 613; the sequence is PETTGYSIDEVEMLFMNKRQRNIAMQARQAKLDAASDKDKNSSTSLSTETITM. Residues 594–613 are disordered; the sequence is AASDKDKNSSTSLSTETITM. Over residues 602–613 the composition is skewed to polar residues; that stretch reads SSTSLSTETITM.

It belongs to the major facilitator superfamily. Sugar transporter (TC 2.A.1.1) family. Expressed in the excretory canal cell and in pairs of amphid and sheath glia.

Its subcellular location is the cell membrane. The protein localises to the perikaryon. It carries out the reaction myo-inositol(out) + H(+)(out) = myo-inositol(in) + H(+)(in). In terms of biological role, h(+)-myo-inositol cotransporter. Probably by promoting the transport of myo-inositol regulates intracellular osmosis in response to hyperosmotic stress. The protein is Proton myo-inositol cotransporter hmit-1.2 of Caenorhabditis elegans.